The sequence spans 606 residues: WD repeat-containing protein 1 (606 aa).

13 WD repeats span residues 4–45 (EIKK…LRNI), 48–87 (PAIADIYTEHAHQVVVAKYAPSGFYIASGDVSGKLRIWDT), 93–135 (LLKY…LWDS), 138–176 (SVGEITGHNKVINSVDIKQSRPYRLVTGSDDNCAAFFEG), 180–218 (KFKFTISDHGRFVNCVRFSPDGNRFATASADGQIFIYDG), 224–263 (VCALGGSKAHDGGIYAISWSPDSTHLLSASGDKTSKIWDV), 270–306 (NTFTMGSNVLDQQLGCLWQKDHLLSISLSGYINYLDK), 311–351 (KPLR…YWDS), 358–408 (SFAG…KLDV), 432–474 (LKDQ…LYSI), 480–518 (KDEGKLLEAKGPVTDLAFSHDGAFLAVCDASKVVTVFSV), 523–561 (SENNVFYGHHAKIVCLAWSPDNEHFASGGMDMMVYVWTL), and 566–604 (TRVKIQDAHRLHHVSSLAWLDEHTLVTTSHDASVKEWTI). An N6-acetyllysine mark is found at K28, K81, K95, and K115. Y238 is modified (phosphotyrosine). An N6-acetyllysine modification is found at K480.

The protein belongs to the WD repeat AIP1 family.

The protein localises to the cytoplasm. The protein resides in the cytoskeleton. It is found in the cell projection. Its subcellular location is the podosome. In terms of biological role, induces disassembly of actin filaments in conjunction with ADF/cofilin family proteins. Enhances cofilin-mediated actin severing. Involved in cytokinesis. Involved in chemotactic cell migration by restricting lamellipodial membrane protrusions. Involved in myocardium sarcomere organization. Required for cardiomyocyte growth and maintenance. Involved in megakaryocyte maturation and platelet shedding. Required for the establishment of planar cell polarity (PCP) during follicular epithelium development and for cell shape changes during PCP; the function seems to implicate cooperation with CFL1 and/or DSTN/ADF. Involved in the generation/maintenance of cortical tension. Involved in assembly and maintenance of epithelial apical cell junctions and plays a role in the organization of the perijunctional actomyosin belt. The chain is WD repeat-containing protein 1 (WDR1) from Bos taurus (Bovine).